We begin with the raw amino-acid sequence, 288 residues long: Light-independent protochlorophyllide reductase iron-sulfur ATP-binding protein (288 aa).

Residues 12 to 17 (GIGKST) and lysine 41 each bind ATP. Serine 16 contributes to the Mg(2+) binding site. [4Fe-4S] cluster contacts are provided by cysteine 97 and cysteine 131. 182 to 183 (NR) contributes to the ATP binding site.

It belongs to the NifH/BchL/ChlL family. In terms of assembly, homodimer. Protochlorophyllide reductase is composed of three subunits; ChlL, ChlN and ChlB. The cofactor is [4Fe-4S] cluster.

It catalyses the reaction chlorophyllide a + oxidized 2[4Fe-4S]-[ferredoxin] + 2 ADP + 2 phosphate = protochlorophyllide a + reduced 2[4Fe-4S]-[ferredoxin] + 2 ATP + 2 H2O. The protein operates within porphyrin-containing compound metabolism; chlorophyll biosynthesis (light-independent). Its function is as follows. Component of the dark-operative protochlorophyllide reductase (DPOR) that uses Mg-ATP and reduced ferredoxin to reduce ring D of protochlorophyllide (Pchlide) to form chlorophyllide a (Chlide). This reaction is light-independent. The L component serves as a unique electron donor to the NB-component of the complex, and binds Mg-ATP. This Picosynechococcus sp. (strain ATCC 27264 / PCC 7002 / PR-6) (Agmenellum quadruplicatum) protein is Light-independent protochlorophyllide reductase iron-sulfur ATP-binding protein.